The sequence spans 361 residues: Phospho-N-acetylmuramoyl-pentapeptide-transferase (361 aa).

Helical transmembrane passes span 25-45, 72-92, 95-115, 135-155, 169-189, 200-220, 240-260, 264-284, 289-309, and 338-358; these read TGGA…WIID, TPTM…VLWA, LNPY…VGFY, LLIE…LGRG, VVLN…VGAG, GLAI…SYLV, LAVL…FNAP, IFMG…IAVA, IVLA…IVQV, and QIVI…LSTL.

This sequence belongs to the glycosyltransferase 4 family. MraY subfamily. The cofactor is Mg(2+).

Its subcellular location is the cell inner membrane. It catalyses the reaction UDP-N-acetyl-alpha-D-muramoyl-L-alanyl-gamma-D-glutamyl-meso-2,6-diaminopimeloyl-D-alanyl-D-alanine + di-trans,octa-cis-undecaprenyl phosphate = di-trans,octa-cis-undecaprenyl diphospho-N-acetyl-alpha-D-muramoyl-L-alanyl-D-glutamyl-meso-2,6-diaminopimeloyl-D-alanyl-D-alanine + UMP. It functions in the pathway cell wall biogenesis; peptidoglycan biosynthesis. Functionally, catalyzes the initial step of the lipid cycle reactions in the biosynthesis of the cell wall peptidoglycan: transfers peptidoglycan precursor phospho-MurNAc-pentapeptide from UDP-MurNAc-pentapeptide onto the lipid carrier undecaprenyl phosphate, yielding undecaprenyl-pyrophosphoryl-MurNAc-pentapeptide, known as lipid I. This Rhodopseudomonas palustris (strain HaA2) protein is Phospho-N-acetylmuramoyl-pentapeptide-transferase.